The chain runs to 271 residues: ATP synthase subunit a (271 aa).

5 helical membrane passes run 31–51 (WDTI…GLYM), 89–109 (FVAP…WIGV), 124–144 (DINL…IVSL), 186–206 (IFSG…VLWL), and 216–236 (LGVG…YYAF). Residues 247-271 (DEHADGGDSSSRQASPTPLPAGQVR) form a disordered region.

Belongs to the ATPase A chain family. In terms of assembly, F-type ATPases have 2 components, CF(1) - the catalytic core - and CF(0) - the membrane proton channel. CF(1) has five subunits: alpha(3), beta(3), gamma(1), delta(1), epsilon(1). CF(0) has three main subunits: a(1), b(2) and c(9-12). The alpha and beta chains form an alternating ring which encloses part of the gamma chain. CF(1) is attached to CF(0) by a central stalk formed by the gamma and epsilon chains, while a peripheral stalk is formed by the delta and b chains.

It localises to the cell membrane. In terms of biological role, key component of the proton channel; it plays a direct role in the translocation of protons across the membrane. In Acidothermus cellulolyticus (strain ATCC 43068 / DSM 8971 / 11B), this protein is ATP synthase subunit a.